Reading from the N-terminus, the 497-residue chain is Subtilisin-like protease CPC735_031240 (497 aa).

An N-terminal signal peptide occupies residues 1–16 (MKGVLSLSLLPLLAAP). Positions 17 to 136 (SPILVDTIHR…IEKDSEVHAW (120 aa)) are excised as a propeptide. Positions 43-134 (SYIVVFKKNV…QYIEKDSEVH (92 aa)) constitute an Inhibitor I9 domain. Residues 146-452 (PWGLARVSHR…GGSSNYTAII (307 aa)) enclose the Peptidase S8 domain. Active-site charge relay system residues include aspartate 182 and histidine 214. N-linked (GlcNAc...) asparagine glycosylation is found at asparagine 244 and asparagine 284. Catalysis depends on serine 380, which acts as the Charge relay system. Asparagine 447 carries N-linked (GlcNAc...) asparagine glycosylation.

It belongs to the peptidase S8 family.

It localises to the secreted. Functionally, secreted subtilisin-like serine protease with keratinolytic activity that contributes to pathogenicity. The polypeptide is Subtilisin-like protease CPC735_031240 (Coccidioides posadasii (strain C735) (Valley fever fungus)).